Reading from the N-terminus, the 421-residue chain is Histidine--tRNA ligase (421 aa).

This sequence belongs to the class-II aminoacyl-tRNA synthetase family. As to quaternary structure, homodimer.

Its subcellular location is the cytoplasm. The enzyme catalyses tRNA(His) + L-histidine + ATP = L-histidyl-tRNA(His) + AMP + diphosphate + H(+). This Francisella tularensis subsp. tularensis (strain SCHU S4 / Schu 4) protein is Histidine--tRNA ligase.